Consider the following 380-residue polypeptide: Succinate--CoA ligase [ADP-forming] subunit beta 2 (380 aa).

Residues 9–235 (KQIFSKHGIR…YTEADQMERI (227 aa)) form the ATP-grasp domain. ATP is bound by residues lysine 45, 52 to 54 (GRG), glutamate 91, isoleucine 94, and glutamate 99. Asparagine 191 and aspartate 204 together coordinate Mg(2+). Residues asparagine 255 and 312–314 (GIT) each bind substrate.

It belongs to the succinate/malate CoA ligase beta subunit family. As to quaternary structure, heterotetramer of two alpha and two beta subunits. The cofactor is Mg(2+).

The catalysed reaction is succinate + ATP + CoA = succinyl-CoA + ADP + phosphate. It catalyses the reaction GTP + succinate + CoA = succinyl-CoA + GDP + phosphate. It participates in carbohydrate metabolism; tricarboxylic acid cycle; succinate from succinyl-CoA (ligase route): step 1/1. Succinyl-CoA synthetase functions in the citric acid cycle (TCA), coupling the hydrolysis of succinyl-CoA to the synthesis of either ATP or GTP and thus represents the only step of substrate-level phosphorylation in the TCA. The beta subunit provides nucleotide specificity of the enzyme and binds the substrate succinate, while the binding sites for coenzyme A and phosphate are found in the alpha subunit. This Archaeoglobus fulgidus (strain ATCC 49558 / DSM 4304 / JCM 9628 / NBRC 100126 / VC-16) protein is Succinate--CoA ligase [ADP-forming] subunit beta 2.